The sequence spans 475 residues: Ribulose bisphosphate carboxylase large chain (475 aa).

Positions 1–2 (MS) are excised as a propeptide. P3 bears the N-acetylproline mark. K14 carries the post-translational modification N6,N6,N6-trimethyllysine. Substrate contacts are provided by N123 and T173. The active-site Proton acceptor is K175. A substrate-binding site is contributed by K177. The Mg(2+) site is built by K201, D203, and E204. Residue K201 is modified to N6-carboxylysine. H294 functions as the Proton acceptor in the catalytic mechanism. Substrate contacts are provided by R295, H327, and S379.

It belongs to the RuBisCO large chain family. Type I subfamily. Heterohexadecamer of 8 large chains and 8 small chains; disulfide-linked. The disulfide link is formed within the large subunit homodimers. It depends on Mg(2+) as a cofactor. Post-translationally, the disulfide bond which can form in the large chain dimeric partners within the hexadecamer appears to be associated with oxidative stress and protein turnover.

It is found in the plastid. Its subcellular location is the chloroplast. The catalysed reaction is 2 (2R)-3-phosphoglycerate + 2 H(+) = D-ribulose 1,5-bisphosphate + CO2 + H2O. It catalyses the reaction D-ribulose 1,5-bisphosphate + O2 = 2-phosphoglycolate + (2R)-3-phosphoglycerate + 2 H(+). RuBisCO catalyzes two reactions: the carboxylation of D-ribulose 1,5-bisphosphate, the primary event in carbon dioxide fixation, as well as the oxidative fragmentation of the pentose substrate in the photorespiration process. Both reactions occur simultaneously and in competition at the same active site. The chain is Ribulose bisphosphate carboxylase large chain from Populus tremuloides (Quaking aspen).